The chain runs to 239 residues: N-glycosylase/DNA lyase (239 aa).

8-oxoguanine-binding residues include Gln24, Ser51, and Trp62. The segment at 118-182 (ERYYEDMTLL…EDVRIIKLTR (65 aa)) is helix-hairpin-helix. The active-site Schiff-base intermediate with DNA is the Lys142. Residues Phe146 and Pro172 each contribute to the 8-oxoguanine site. Asp174 is a catalytic residue. Positions 208 and 212 each coordinate 8-oxoguanine.

The protein belongs to the archaeal N-glycosylase/DNA lyase (AGOG) family.

The enzyme catalyses 2'-deoxyribonucleotide-(2'-deoxyribose 5'-phosphate)-2'-deoxyribonucleotide-DNA = a 3'-end 2'-deoxyribonucleotide-(2,3-dehydro-2,3-deoxyribose 5'-phosphate)-DNA + a 5'-end 5'-phospho-2'-deoxyribonucleoside-DNA + H(+). Its function is as follows. DNA repair enzyme that is part of the base excision repair (BER) pathway; protects from oxidative damage by removing the major product of DNA oxidation, 8-oxoguanine (GO), from single- and double-stranded DNA substrates. The polypeptide is N-glycosylase/DNA lyase (Pyrococcus horikoshii (strain ATCC 700860 / DSM 12428 / JCM 9974 / NBRC 100139 / OT-3)).